The chain runs to 444 residues: Multidrug resistance protein MdtA (444 aa).

An N-terminal signal peptide occupies residues 1 to 20; that stretch reads MKSQSKRTSRLFVFVGGVVA. The span at 37-52 shows a compositional bias: polar residues; that stretch reads NNTSGAQQSARGQDTS. Disordered stretches follow at residues 37–60 and 398–444; these read NNTS…RNTP and TPRS…AEKS. The span at 406–419 shows a compositional bias: low complexity; that stretch reads ANPASAEKAAAEAE. Residues 435 to 444 show a composition bias toward polar residues; sequence ARSTTAAEKS.

It belongs to the membrane fusion protein (MFP) (TC 8.A.1) family. In terms of assembly, part of a tripartite efflux system composed of MdtA, MdtB and MdtC.

The protein localises to the cell inner membrane. The polypeptide is Multidrug resistance protein MdtA (Yersinia pseudotuberculosis serotype O:1b (strain IP 31758)).